Here is a 348-residue protein sequence, read N- to C-terminus: Protein RecA (348 aa).

Residue 66-73 coordinates ATP; that stretch reads GPESSGKT.

The protein belongs to the RecA family.

It localises to the cytoplasm. Can catalyze the hydrolysis of ATP in the presence of single-stranded DNA, the ATP-dependent uptake of single-stranded DNA by duplex DNA, and the ATP-dependent hybridization of homologous single-stranded DNAs. It interacts with LexA causing its activation and leading to its autocatalytic cleavage. This is Protein RecA from Burkholderia lata (strain ATCC 17760 / DSM 23089 / LMG 22485 / NCIMB 9086 / R18194 / 383).